A 319-amino-acid chain; its full sequence is D-alanine--D-alanine ligase (319 aa).

Residues 109-313 (KRVWLAEGLP…YEQLCLHILQ (205 aa)) form the ATP-grasp domain. Residue 139 to 194 (PDDLGLPLIVKPPREGSSIGVTKVLGYSQMQDAVALSARHDPDVLCEEFIDGAEVT) participates in ATP binding. Mg(2+) is bound by residues Asp266, Glu280, and Asn282.

The protein belongs to the D-alanine--D-alanine ligase family. Mg(2+) serves as cofactor. The cofactor is Mn(2+).

It localises to the cytoplasm. The enzyme catalyses 2 D-alanine + ATP = D-alanyl-D-alanine + ADP + phosphate + H(+). It functions in the pathway cell wall biogenesis; peptidoglycan biosynthesis. Its function is as follows. Cell wall formation. The polypeptide is D-alanine--D-alanine ligase (Methylibium petroleiphilum (strain ATCC BAA-1232 / LMG 22953 / PM1)).